We begin with the raw amino-acid sequence, 167 residues long: 6,7-dimethyl-8-ribityllumazine synthase (167 aa).

5-amino-6-(D-ribitylamino)uracil-binding positions include Phe26, 60 to 62 (AFE), and 89 to 91 (AVI). 94-95 (ET) is a binding site for (2S)-2-hydroxy-3-oxobutyl phosphate. His97 (proton donor) is an active-site residue. Phe122 contacts 5-amino-6-(D-ribitylamino)uracil. Residue Arg136 participates in (2S)-2-hydroxy-3-oxobutyl phosphate binding.

This sequence belongs to the DMRL synthase family. Forms an icosahedral capsid composed of 60 subunits, arranged as a dodecamer of pentamers.

It carries out the reaction (2S)-2-hydroxy-3-oxobutyl phosphate + 5-amino-6-(D-ribitylamino)uracil = 6,7-dimethyl-8-(1-D-ribityl)lumazine + phosphate + 2 H2O + H(+). Its pathway is cofactor biosynthesis; riboflavin biosynthesis; riboflavin from 2-hydroxy-3-oxobutyl phosphate and 5-amino-6-(D-ribitylamino)uracil: step 1/2. In terms of biological role, catalyzes the formation of 6,7-dimethyl-8-ribityllumazine by condensation of 5-amino-6-(D-ribitylamino)uracil with 3,4-dihydroxy-2-butanone 4-phosphate. This is the penultimate step in the biosynthesis of riboflavin. The sequence is that of 6,7-dimethyl-8-ribityllumazine synthase from Vesicomyosocius okutanii subsp. Calyptogena okutanii (strain HA).